The following is a 400-amino-acid chain: Large envelope protein (400 aa).

Met1 carries the N-acetylmethionine modification. Gly2 carries N-myristoyl glycine; by host lipidation. Positions Gly2–Ala119 are pre-S1. Residues Gly2–Asn174 are pre-S. Residues Gly2–Gly181 are Virion surface; in external conformation-facing. Over Gly2 to Arg253 the chain is Intravirion; in internal conformation. Pro4 is a glycosylation site (N-linked (GlcNAc...) asparagine). Residues Pro70–Thr115 are disordered. Residues Pro79–Ser88 show a composition bias toward polar residues. Residues Met120–Asn174 are pre-S2. Residues Leu182–Ile202 traverse the membrane as a helical segment. Over Pro203–Arg253 the chain is Intravirion; in external conformation. The chain crosses the membrane as a helical span at residues Phe254–Tyr274. The Virion surface segment spans residues Gln275 to Ser348. Residue Asn320 is glycosylated (N-linked (GlcNAc...) asparagine; by host). A helical membrane pass occupies residues Leu349–Ile369. Residues Trp370–Trp375 are Intravirion-facing. The chain crosses the membrane as a helical span at residues Gly376–Ala398. The Virion surface segment spans residues Ser399–Ile400.

This sequence belongs to the orthohepadnavirus major surface antigen family. In terms of assembly, in its internal form (Li-HBsAg), interacts with the capsid protein and with the isoform S. Interacts with host chaperone CANX. Associates with host chaperone CANX through its pre-S2 N glycan; this association may be essential for isoform M proper secretion. As to quaternary structure, interacts with isoform L. Interacts with the antigens of satellite virus HDV (HDVAgs); this interaction is required for encapsidation of HDV genomic RNA. Isoform M is N-terminally acetylated by host at a ratio of 90%, and N-glycosylated by host at the pre-S2 region. In terms of processing, myristoylated.

The protein localises to the virion membrane. Its function is as follows. The large envelope protein exists in two topological conformations, one which is termed 'external' or Le-HBsAg and the other 'internal' or Li-HBsAg. In its external conformation the protein attaches the virus to cell receptors and thereby initiating infection. This interaction determines the species specificity and liver tropism. This attachment induces virion internalization predominantly through caveolin-mediated endocytosis. The large envelope protein also assures fusion between virion membrane and endosomal membrane. In its internal conformation the protein plays a role in virion morphogenesis and mediates the contact with the nucleocapsid like a matrix protein. Functionally, the middle envelope protein plays an important role in the budding of the virion. It is involved in the induction of budding in a nucleocapsid independent way. In this process the majority of envelope proteins bud to form subviral lipoprotein particles of 22 nm of diameter that do not contain a nucleocapsid. In Hepatitis B virus genotype H subtype adw4 (isolate Nicaragua/2928Nic/1997) (HBV-H), this protein is Large envelope protein.